Reading from the N-terminus, the 449-residue chain is L-lysine-epsilon aminotransferase (449 aa).

Positions 128 and 129 each coordinate pyridoxal 5'-phosphate. 2-oxoglutarate-binding residues include R170 and Q274. R170 contributes to the L-lysine binding site. Position 274 (Q274) interacts with pyridoxal 5'-phosphate. K300 carries the N6-(pyridoxal phosphate)lysine modification. 2-oxoglutarate is bound at residue R422.

This sequence belongs to the class-III pyridoxal-phosphate-dependent aminotransferase family. Pyridoxal 5'-phosphate serves as cofactor.

The enzyme catalyses L-lysine + 2-oxoglutarate = (S)-2-amino-6-oxohexanoate + L-glutamate. Its function is as follows. Catalyzes the transfer of the terminal amino group of L-lysine to alpha-ketoglutarate to yield L-glutamate and 2-aminoadipate 6-semialdehyde ((S)-2-amino-6-oxohexanoate), which is spontaneously converted to the dehydrated form 1-piperideine 6-carboxylate. The chain is L-lysine-epsilon aminotransferase from Mycobacterium bovis (strain ATCC BAA-935 / AF2122/97).